The following is a 395-amino-acid chain: S-adenosylmethionine synthase (395 aa).

H18 lines the ATP pocket. Residue D20 participates in Mg(2+) binding. E46 serves as a coordination point for K(+). The L-methionine site is built by E59 and Q103. The interval 103–113 (QSVDIAVGVDA) is flexible loop. Residues 170–172 (DAK), 235–236 (KF), D244, 250–251 (RK), A267, and K271 each bind ATP. D244 contributes to the L-methionine binding site. K275 lines the L-methionine pocket.

The protein belongs to the AdoMet synthase family. As to quaternary structure, homotetramer; dimer of dimers. The cofactor is Mg(2+). K(+) is required as a cofactor.

It is found in the cytoplasm. The catalysed reaction is L-methionine + ATP + H2O = S-adenosyl-L-methionine + phosphate + diphosphate. The protein operates within amino-acid biosynthesis; S-adenosyl-L-methionine biosynthesis; S-adenosyl-L-methionine from L-methionine: step 1/1. Catalyzes the formation of S-adenosylmethionine (AdoMet) from methionine and ATP. The overall synthetic reaction is composed of two sequential steps, AdoMet formation and the subsequent tripolyphosphate hydrolysis which occurs prior to release of AdoMet from the enzyme. In Acidiphilium cryptum (strain JF-5), this protein is S-adenosylmethionine synthase.